The chain runs to 379 residues: Pectin lyase A (379 aa).

The signal sequence occupies residues 1 to 20 (MKYSTIFSAAAAVFAGSAAA). 2 disulfide bridges follow: Cys-83/Cys-102 and Cys-92/Cys-226. O-linked (Man) threonine glycosylation is present at Thr-88. Asn-129 is a glycosylation site (N-linked (GlcNAc...) asparagine). Residue Arg-256 is part of the active site. A disulfide bridge links Cys-322 with Cys-330. Ser-368 is a glycosylation site (O-linked (Man) serine; in strain 4M-147).

It belongs to the polysaccharide lyase 1 family. Post-translationally, N-glycosylated at Asn-129 and O-glycosylated at Thr-88 when expressed in Aspergillus nidulans. The protein from strain 4M-147 is O-glycosylated at Thr-88 and Ser-368. PubMed:9195887 modeled GalNAc at the O-glycosylation site, a glycosylation not observed in fungi. The O-linked saccharide is probably mannose.

The protein localises to the secreted. The catalysed reaction is Eliminative cleavage of (1-&gt;4)-alpha-D-galacturonan methyl ester to give oligosaccharides with 4-deoxy-6-O-methyl-alpha-D-galact-4-enuronosyl groups at their non-reducing ends.. In terms of biological role, pectinolytic enzymes consist of four classes of enzymes: pectin lyase, polygalacturonase, pectin methylesterase and rhamnogalacturonase. Among pectinolytic enzymes, pectin lyase is the most important in depolymerization of pectin, since it cleaves internal glycosidic bonds of highly methylated pectins. The protein is Pectin lyase A (pelA) of Aspergillus niger.